Reading from the N-terminus, the 249-residue chain is MERHVPEPTHTLEGWHVLHDFRLLDFARWFSAPLEAREDAWEELKGLVREWRELEEAGQGSYGIYQVVGHKADLLFLNLRPGLDPLLEAEARLSRSAFARYLGRSYSFYSVVELGSQEKPLDPESPYVKPRLTPRVPKSGYVCFYPMNKRRQGQDNWYMLPAKERASLMKAHGETGRKYQGKVMQVISGAQGLDDWEWGVDLFSEDPVQFKKIVYEMRFDEVSARYGEFGPFFVGKYLDEEALRAFLGL.

Residues arginine 131, 145–149, histidine 172, glutamine 185, and serine 223 contribute to the Fe-coproporphyrin III site; that span reads YPMNK. Tyrosine 145 is a catalytic residue.

It belongs to the ChdC family. Type 1 subfamily. Fe-coproporphyrin III serves as cofactor.

It catalyses the reaction Fe-coproporphyrin III + 2 H2O2 + 2 H(+) = heme b + 2 CO2 + 4 H2O. It carries out the reaction Fe-coproporphyrin III + H2O2 + H(+) = harderoheme III + CO2 + 2 H2O. The catalysed reaction is harderoheme III + H2O2 + H(+) = heme b + CO2 + 2 H2O. The protein operates within porphyrin-containing compound metabolism; protoheme biosynthesis. Involved in coproporphyrin-dependent heme b biosynthesis. Catalyzes the decarboxylation of Fe-coproporphyrin III (coproheme) to heme b (protoheme IX), the last step of the pathway. The reaction occurs in a stepwise manner with a three-propionate intermediate. The polypeptide is Coproheme decarboxylase (Thermus thermophilus (strain ATCC BAA-163 / DSM 7039 / HB27)).